A 618-amino-acid polypeptide reads, in one-letter code: Beta-glucosidase C (618 aa).

An N-terminal signal peptide occupies residues 1–19 (MRVDSTVLALVALATDCLG). Residues Asn-40, Asn-82, Asn-104, Asn-211, and Asn-263 are each glycosylated (N-linked (GlcNAc...) asparagine). Asp-330 is a catalytic residue. N-linked (GlcNAc...) asparagine glycosylation is found at Asn-417, Asn-448, Asn-477, Asn-482, Asn-502, and Asn-517.

Belongs to the glycosyl hydrolase 3 family.

The protein resides in the secreted. It catalyses the reaction Hydrolysis of terminal, non-reducing beta-D-glucosyl residues with release of beta-D-glucose.. It functions in the pathway glycan metabolism; cellulose degradation. Beta-glucosidases are one of a number of cellulolytic enzymes involved in the degradation of cellulosic biomass. Catalyzes the last step releasing glucose from the inhibitory cellobiose. This chain is Beta-glucosidase C (bglC), found in Emericella nidulans (strain FGSC A4 / ATCC 38163 / CBS 112.46 / NRRL 194 / M139) (Aspergillus nidulans).